The chain runs to 79 residues: Keratin-associated protein 21-1 (79 aa).

Interacts with hair keratins.

In the hair cortex, hair keratin intermediate filaments are embedded in an interfilamentous matrix, consisting of hair keratin-associated proteins (KRTAP), which are essential for the formation of a rigid and resistant hair shaft through their extensive disulfide bond cross-linking with abundant cysteine residues of hair keratins. The matrix proteins include the high-sulfur and high-glycine-tyrosine keratins. The sequence is that of Keratin-associated protein 21-1 (KRTAP21-1) from Homo sapiens (Human).